Here is a 370-residue protein sequence, read N- to C-terminus: Putative agmatine deiminase (370 aa).

Cys361 acts as the Amidino-cysteine intermediate in catalysis.

The protein belongs to the agmatine deiminase family.

It catalyses the reaction agmatine + H2O = N-carbamoylputrescine + NH4(+). The sequence is that of Putative agmatine deiminase from Shewanella baltica (strain OS185).